The chain runs to 272 residues: F-actin-capping protein subunit beta (272 aa).

The protein belongs to the F-actin-capping protein beta subunit family. Component of the F-actin capping complex, composed of a heterodimer of an alpha and a beta subunit.

It is found in the cytoplasm. The protein resides in the cytoskeleton. F-actin-capping proteins bind in a Ca(2+)-independent manner to the fast growing ends of actin filaments (barbed end) thereby blocking the exchange of subunits at these ends. Unlike other capping proteins (such as gelsolin and severin), these proteins do not sever actin filaments. The protein is F-actin-capping protein subunit beta (acpA) of Dictyostelium discoideum (Social amoeba).